Reading from the N-terminus, the 1220-residue chain is DNA-directed RNA polymerase subunit beta (1220 aa).

The protein belongs to the RNA polymerase beta chain family. As to quaternary structure, the RNAP catalytic core consists of 2 alpha, 1 beta, 1 beta' and 1 omega subunit. When a sigma factor is associated with the core the holoenzyme is formed, which can initiate transcription.

The enzyme catalyses RNA(n) + a ribonucleoside 5'-triphosphate = RNA(n+1) + diphosphate. In terms of biological role, DNA-dependent RNA polymerase catalyzes the transcription of DNA into RNA using the four ribonucleoside triphosphates as substrates. The chain is DNA-directed RNA polymerase subunit beta from Mesomycoplasma hyopneumoniae (strain 232) (Mycoplasma hyopneumoniae).